The primary structure comprises 318 residues: GPN-loop GTPase 2 (318 aa).

29-34 provides a ligand contact to GTP; that stretch reads GSGKST. A Gly-Pro-Asn (GPN)-loop; involved in dimer interface motif is present at residues 85-87; that stretch reads GPN. Residue 187 to 190 coordinates GTP; that stretch reads SKMD.

The protein belongs to the GPN-loop GTPase family. Heterodimers with gpn1 or gpn3. Binds to RNA polymerase II (RNAPII).

Its function is as follows. Small GTPase required for proper localization of RNA polymerase II and III (RNAPII and RNAPIII). May act at an RNAP assembly step prior to nuclear import. The sequence is that of GPN-loop GTPase 2 from Xenopus laevis (African clawed frog).